Consider the following 327-residue polypeptide: Gonadotropin-releasing hormone receptor (327 aa).

At 1–37 (MASASPEQNQNHCSAVNNSNMLMQGNLPTLTLSGKIR) the chain is on the extracellular side. N-linked (GlcNAc...) asparagine glycosylation occurs at N17. Residues 38-57 (VTVTFFLFLLSTIFNASFLL) traverse the membrane as a helical segment. Residues 58–76 (KLQKWTQKKEKGKKLSRMK) lie on the Cytoplasmic side of the membrane. The chain crosses the membrane as a helical span at residues 77-96 (VLLKHLTLANLLETLIVMPL). Residues 97-114 (DGMWNITVQWYAGEFLCK) are Extracellular-facing. N101 carries an N-linked (GlcNAc...) asparagine glycan. An intrachain disulfide couples C113 to C195. The chain crosses the membrane as a helical span at residues 115 to 136 (VLSYLKLFSMYAPAFMMVVISL). At 137–163 (DRSLAITRPLAMKNNGKLGQSMIGLAW) the chain is on the cytoplasmic side. A helical transmembrane segment spans residues 164–183 (LLSGIFAGPQLYIFRMIHLA). The Extracellular portion of the chain corresponds to 184-211 (DSSGQTEGFPQCVTHCSFPQWWHQAFYN). The helical transmembrane segment at 212–231 (FFTFSCLFIIPLFITLICNA) threads the bilayer. At 232–280 (KIIFTLTRVLHQDPHELQLNQSKNNIPRARLRTLKMTVAFATSFTVCWT) the chain is on the cytoplasmic side. Residues 281 to 299 (PYYVLGIWYWFDPEMLNRV) traverse the membrane as a helical segment. The Extracellular portion of the chain corresponds to 300–305 (SDPVNH). Residues 306–325 (FFFLFALLNPCFDPLIYGYF) traverse the membrane as a helical segment. The Cytoplasmic portion of the chain corresponds to 326–327 (SL).

It belongs to the G-protein coupled receptor 1 family.

It localises to the cell membrane. Receptor for gonadotropin releasing hormone (GnRH) that mediates the action of GnRH to stimulate the secretion of the gonadotropic hormones luteinizing hormone (LH) and follicle-stimulating hormone (FSH). This receptor mediates its action by association with G-proteins that activate a phosphatidylinositol-calcium second messenger system. This is Gonadotropin-releasing hormone receptor (GNRHR) from Canis lupus familiaris (Dog).